Consider the following 503-residue polypeptide: Glutamyl-tRNA(Gln) amidotransferase subunit A (503 aa).

Residues lysine 79 and serine 154 each act as charge relay system in the active site. Catalysis depends on serine 178, which acts as the Acyl-ester intermediate.

Belongs to the amidase family. GatA subfamily. Heterotrimer of A, B and C subunits.

It catalyses the reaction L-glutamyl-tRNA(Gln) + L-glutamine + ATP + H2O = L-glutaminyl-tRNA(Gln) + L-glutamate + ADP + phosphate + H(+). Its function is as follows. Allows the formation of correctly charged Gln-tRNA(Gln) through the transamidation of misacylated Glu-tRNA(Gln) in organisms which lack glutaminyl-tRNA synthetase. The reaction takes place in the presence of glutamine and ATP through an activated gamma-phospho-Glu-tRNA(Gln). The polypeptide is Glutamyl-tRNA(Gln) amidotransferase subunit A (Agathobacter rectalis (strain ATCC 33656 / DSM 3377 / JCM 17463 / KCTC 5835 / VPI 0990) (Eubacterium rectale)).